Consider the following 361-residue polypeptide: Rho-GTPase-activating protein 5 (361 aa).

A Rho-GAP domain is found at isoleucine 52–isoleucine 245. The segment covering serine 306 to serine 323 has biased composition (low complexity). Residues serine 306–serine 345 are disordered.

It is found in the membrane. GTPase-activating protein for Rho1. Has a role in the negative regulation of (1-3)beta-D-glucan synthase activity and cell integrity. The polypeptide is Rho-GTPase-activating protein 5 (rga5) (Schizosaccharomyces pombe (strain 972 / ATCC 24843) (Fission yeast)).